We begin with the raw amino-acid sequence, 22 residues long: Phospholipase A2 (22 aa).

It belongs to the phospholipase A2 family. The cofactor is Ca(2+).

Its subcellular location is the secreted. It carries out the reaction a 1,2-diacyl-sn-glycero-3-phosphocholine + H2O = a 1-acyl-sn-glycero-3-phosphocholine + a fatty acid + H(+). In terms of biological role, PA2 catalyzes the calcium-dependent hydrolysis of the 2-acyl groups in 3-sn-phosphoglycerides. In Struthio camelus (Common ostrich), this protein is Phospholipase A2.